A 433-amino-acid polypeptide reads, in one-letter code: Trigger factor (433 aa).

Residues 163–248 (GDTVNIDFSG…VNEIKFKDVP (86 aa)) form the PPIase FKBP-type domain.

It belongs to the FKBP-type PPIase family. Tig subfamily.

The protein localises to the cytoplasm. The enzyme catalyses [protein]-peptidylproline (omega=180) = [protein]-peptidylproline (omega=0). Involved in protein export. Acts as a chaperone by maintaining the newly synthesized protein in an open conformation. Functions as a peptidyl-prolyl cis-trans isomerase. This chain is Trigger factor, found in Staphylococcus epidermidis (strain ATCC 35984 / DSM 28319 / BCRC 17069 / CCUG 31568 / BM 3577 / RP62A).